The following is a 334-amino-acid chain: Phosphate acyltransferase (334 aa).

This sequence belongs to the PlsX family. Homodimer. Probably interacts with PlsY.

The protein resides in the cytoplasm. The catalysed reaction is a fatty acyl-[ACP] + phosphate = an acyl phosphate + holo-[ACP]. It participates in lipid metabolism; phospholipid metabolism. Its function is as follows. Catalyzes the reversible formation of acyl-phosphate (acyl-PO(4)) from acyl-[acyl-carrier-protein] (acyl-ACP). This enzyme utilizes acyl-ACP as fatty acyl donor, but not acyl-CoA. In Caldicellulosiruptor saccharolyticus (strain ATCC 43494 / DSM 8903 / Tp8T 6331), this protein is Phosphate acyltransferase.